Consider the following 196-residue polypeptide: Glycerol-3-phosphate acyltransferase 2 (196 aa).

A run of 5 helical transmembrane segments spans residues 2-22, 52-72, 80-100, 112-132, and 137-156; these read GWWL…SYLI, VGGI…FITI, IVSL…FMKF, IIFC…LVIV, and YASL…GYLL.

Belongs to the PlsY family. As to quaternary structure, probably interacts with PlsX.

It localises to the cell inner membrane. It carries out the reaction an acyl phosphate + sn-glycerol 3-phosphate = a 1-acyl-sn-glycero-3-phosphate + phosphate. The protein operates within lipid metabolism; phospholipid metabolism. In terms of biological role, catalyzes the transfer of an acyl group from acyl-phosphate (acyl-PO(4)) to glycerol-3-phosphate (G3P) to form lysophosphatidic acid (LPA). This enzyme utilizes acyl-phosphate as fatty acyl donor, but not acyl-CoA or acyl-ACP. This chain is Glycerol-3-phosphate acyltransferase 2, found in Thermotoga maritima (strain ATCC 43589 / DSM 3109 / JCM 10099 / NBRC 100826 / MSB8).